The following is a 201-amino-acid chain: Adapter protein MecA 1 (201 aa).

The protein belongs to the MecA family. Homodimer.

Enables the recognition and targeting of unfolded and aggregated proteins to the ClpC protease or to other proteins involved in proteolysis. Acts negatively in the development of competence by binding ComK and recruiting it to the ClpCP protease. When overexpressed, inhibits sporulation. Also involved in Spx degradation by ClpC. The protein is Adapter protein MecA 1 (mecA1) of Halalkalibacterium halodurans (strain ATCC BAA-125 / DSM 18197 / FERM 7344 / JCM 9153 / C-125) (Bacillus halodurans).